Here is a 570-residue protein sequence, read N- to C-terminus: Sulfite reductase [NADPH] hemoprotein beta-component (570 aa).

[4Fe-4S] cluster-binding residues include cysteine 434, cysteine 440, cysteine 479, and cysteine 483. Cysteine 483 serves as a coordination point for siroheme.

Belongs to the nitrite and sulfite reductase 4Fe-4S domain family. As to quaternary structure, alpha(8)-beta(8). The alpha component is a flavoprotein, the beta component is a hemoprotein. It depends on siroheme as a cofactor. The cofactor is [4Fe-4S] cluster.

The enzyme catalyses hydrogen sulfide + 3 NADP(+) + 3 H2O = sulfite + 3 NADPH + 4 H(+). Its pathway is sulfur metabolism; hydrogen sulfide biosynthesis; hydrogen sulfide from sulfite (NADPH route): step 1/1. Component of the sulfite reductase complex that catalyzes the 6-electron reduction of sulfite to sulfide. This is one of several activities required for the biosynthesis of L-cysteine from sulfate. The protein is Sulfite reductase [NADPH] hemoprotein beta-component of Salmonella gallinarum (strain 287/91 / NCTC 13346).